The following is a 95-amino-acid chain: Non-specific lipid-transfer protein (95 aa).

3 cysteine pairs are disulfide-bonded: Cys-4–Cys-52, Cys-14–Cys-29, and Cys-50–Cys-90.

This sequence belongs to the plant LTP family. As to expression, seeds.

Plant non-specific lipid-transfer proteins transfer phospholipids as well as galactolipids across membranes. May play a role in wax or cutin deposition in the cell walls of expanding epidermal cells and certain secretory tissues. In Eleusine coracana (Indian finger millet), this protein is Non-specific lipid-transfer protein.